The sequence spans 203 residues: Kunitz trypsin inhibitor 6 (203 aa).

The N-terminal stretch at 1-21 (MKTFQLMMISFLFVAITTTSG) is a signal peptide. Cys70 and Cys115 are joined by a disulfide. N-linked (GlcNAc...) asparagine glycosylation is found at Asn94, Asn127, Asn136, Asn144, and Asn197.

This sequence belongs to the protease inhibitor I3 (leguminous Kunitz-type inhibitor) family.

Its function is as follows. Exhibits Kunitz trypsin protease inhibitor activity. This chain is Kunitz trypsin inhibitor 6, found in Arabidopsis thaliana (Mouse-ear cress).